Consider the following 1711-residue polypeptide: Serine/threonine-protein kinase MRCK beta (1711 aa).

Residues 76-342 (FEIIKVIGRG…IEDFKKHAFF (267 aa)) enclose the Protein kinase domain. ATP contacts are provided by residues 82 to 90 (IGRGAFGEV) and Lys105. Asp200 serves as the catalytic Proton acceptor. Residues Ser221 and Ser233 each carry the phosphoserine; by autocatalysis modification. At Thr239 the chain carries Phosphothreonine; by autocatalysis. Residues 343–413 (EGLNWENIRN…TTESCFSDRG (71 aa)) enclose the AGC-kinase C-terminal domain. Thr423 carries the phosphothreonine modification. Coiled-coil stretches lie at residues 431–815 (QRDL…AHWE) and 878–939 (ELQS…FRAD). Residues 461 to 484 (LQESTQTVQSLHGSSRALSNSNRD) form a disordered region. The segment covering 463-481 (ESTQTVQSLHGSSRALSNS) has biased composition (polar residues). Residue Arg671 is modified to Omega-N-methylarginine. Phosphotyrosine is present on Tyr954. The interval 969–1009 (SSASEQETQAPKPEASPSMSVAASEQQEDMARPPQRPSAVP) is disordered. A Phorbol-ester/DAG-type zinc finger spans residues 1025–1075 (AHQFSIKSFSSPTQCSHCTSLMVGLIRQGYACEVCSFACHVSCKDGAPQVC). The region spanning 1095-1214 (GTAYKGHVKV…WVGILEGLQS (120 aa)) is the PH domain. Residues 1240–1513 (IKAILTAAIV…RPLNSEGTLN (274 aa)) enclose the CNH domain. The 14-residue stretch at 1583–1596 (ISNPTNFNHVAHMG) folds into the CRIB domain. The interval 1611–1711 (AVPPSQEERP…EGLEQPACDT (101 aa)) is disordered. Positions 1641–1650 (WPSSGGSEPS) are enriched in polar residues. Positions 1664 to 1675 (DFDKEPDSDSTK) are enriched in basic and acidic residues. A phosphoserine mark is found at Ser1680, Ser1682, Ser1686, Ser1690, and Ser1693.

The protein belongs to the protein kinase superfamily. AGC Ser/Thr protein kinase family. DMPK subfamily. In terms of assembly, homodimer and homotetramer via the coiled coil regions. Interacts tightly with GTP-bound but not GDP-bound CDC42. Interacts with TJP1, when in the presence of catalytically active CDC42. Forms a tripartite complex with MYO18A and LURAP1 with the latter acting as an adapter connecting CDC42BPB and MYO18A. LURAP1 binding results in activation of CDC42BPB by abolition of its negative autoregulation. Interacts with STRIP1, STRN3 and SIKE1. Interacts with CPNE4 (via VWFA domain). Interacts with LURAP1. Interacts (via AGC-kinase C-terminal domain) with FAM89B/LRAP25 (via LRR repeat). Forms a tripartite complex with FAM89B/LRAP25 and LIMK1. Mg(2+) serves as cofactor. Proteolytically cleaved by caspases upon apoptosis induction. In terms of tissue distribution, expressed in all tissues examined, with high levels in heart, brain, placenta and lung.

Its subcellular location is the cytoplasm. The protein resides in the cell membrane. It localises to the cell junction. The protein localises to the cell projection. It is found in the lamellipodium. It catalyses the reaction L-seryl-[protein] + ATP = O-phospho-L-seryl-[protein] + ADP + H(+). The enzyme catalyses L-threonyl-[protein] + ATP = O-phospho-L-threonyl-[protein] + ADP + H(+). Its activity is regulated as follows. Maintained in an inactive, closed conformation by an interaction between the kinase domain and the negative autoregulatory C-terminal coiled-coil region. Agonist binding to the phorbol ester binding site disrupts this, releasing the kinase domain to allow N-terminus-mediated dimerization and kinase activation by transautophosphorylation. Inhibited by chelerythrine chloride. Functionally, serine/threonine-protein kinase which is an important downstream effector of CDC42 and plays a role in the regulation of cytoskeleton reorganization and cell migration. Regulates actin cytoskeletal reorganization via phosphorylation of PPP1R12C and MYL9/MLC2. In concert with MYO18A and LURAP1, is involved in modulating lamellar actomyosin retrograde flow that is crucial to cell protrusion and migration. Phosphorylates PPP1R12A. In concert with FAM89B/LRAP25 mediates the targeting of LIMK1 to the lamellipodium resulting in its activation and subsequent phosphorylation of CFL1 which is important for lamellipodial F-actin regulation. The chain is Serine/threonine-protein kinase MRCK beta from Homo sapiens (Human).